Here is a 232-residue protein sequence, read N- to C-terminus: Orotidine 5'-phosphate decarboxylase (232 aa).

Substrate is bound by residues aspartate 10, lysine 32, 59 to 68, threonine 119, arginine 180, glutamine 189, glycine 209, and arginine 210; that span reads DLKFHDIPNT. The active-site Proton donor is the lysine 61.

Belongs to the OMP decarboxylase family. Type 1 subfamily. In terms of assembly, homodimer.

It catalyses the reaction orotidine 5'-phosphate + H(+) = UMP + CO2. It participates in pyrimidine metabolism; UMP biosynthesis via de novo pathway; UMP from orotate: step 2/2. Its function is as follows. Catalyzes the decarboxylation of orotidine 5'-monophosphate (OMP) to uridine 5'-monophosphate (UMP). The chain is Orotidine 5'-phosphate decarboxylase from Actinobacillus succinogenes (strain ATCC 55618 / DSM 22257 / CCUG 43843 / 130Z).